A 269-amino-acid chain; its full sequence is Phosphatidylglycerol--prolipoprotein diacylglyceryl transferase (269 aa).

7 helical membrane-spanning segments follow: residues 10-30 (VALA…LIGI), 56-76 (MVFW…VLFY), 92-112 (WKGG…AWWF), 120-140 (FFEL…AGRI), 174-194 (PSQL…LWLF), 202-222 (MAVS…VEFV), and 237-257 (LTMG…LIWL). Arginine 139 provides a ligand contact to a 1,2-diacyl-sn-glycero-3-phospho-(1'-sn-glycerol).

It belongs to the Lgt family.

Its subcellular location is the cell inner membrane. It catalyses the reaction L-cysteinyl-[prolipoprotein] + a 1,2-diacyl-sn-glycero-3-phospho-(1'-sn-glycerol) = an S-1,2-diacyl-sn-glyceryl-L-cysteinyl-[prolipoprotein] + sn-glycerol 1-phosphate + H(+). It functions in the pathway protein modification; lipoprotein biosynthesis (diacylglyceryl transfer). Functionally, catalyzes the transfer of the diacylglyceryl group from phosphatidylglycerol to the sulfhydryl group of the N-terminal cysteine of a prolipoprotein, the first step in the formation of mature lipoproteins. The polypeptide is Phosphatidylglycerol--prolipoprotein diacylglyceryl transferase (Pseudomonas fluorescens (strain ATCC BAA-477 / NRRL B-23932 / Pf-5)).